The sequence spans 169 residues: Der GTPase-activating protein YihI (169 aa).

2 disordered regions span residues 1-99 (MKPS…QAEL) and 146-169 (SYDD…LRGN). The segment covering 10 to 19 (SKGHAKARRK) has biased composition (basic residues). The span at 20-30 (TREELDQEARD) shows a compositional bias: basic and acidic residues. The span at 31 to 40 (RKRQKKRRGH) shows a compositional bias: basic residues. The span at 49 to 58 (GNTTSGSKGQ) shows a compositional bias: polar residues. A compositionally biased stretch (acidic residues) spans 147–159 (YDDDEEEEEDEKQ). Residues 160–169 (EDMMRLLRGN) show a composition bias toward basic and acidic residues.

Belongs to the YihI family. In terms of assembly, interacts with Der.

In terms of biological role, a GTPase-activating protein (GAP) that modifies Der/EngA GTPase function. May play a role in ribosome biogenesis. The sequence is that of Der GTPase-activating protein YihI from Escherichia coli O81 (strain ED1a).